A 262-amino-acid chain; its full sequence is 5'-nucleotidase SurE (262 aa).

4 residues coordinate a divalent metal cation: Asp13, Asp14, Ser44, and Asn97.

This sequence belongs to the SurE nucleotidase family. Requires a divalent metal cation as cofactor.

It localises to the cytoplasm. It catalyses the reaction a ribonucleoside 5'-phosphate + H2O = a ribonucleoside + phosphate. Its function is as follows. Nucleotidase that shows phosphatase activity on nucleoside 5'-monophosphates. The chain is 5'-nucleotidase SurE from Myxococcus xanthus (strain DK1622).